A 147-amino-acid chain; its full sequence is RxLR effector protein Avr3a (147 aa).

The first 21 residues, 1 to 21 (MRLAIMLSATAVAINFATCSA), serve as a signal peptide directing secretion. A RxLR-dEER motif is present at residues 44-59 (RLLRKNEENEETSEER). K48 carries the post-translational modification N6-acetyllysine. The segment at 77–147 (ALTKRADAKK…YMMHLGLTGY (71 aa)) is effector domain.

Belongs to the RxLR effector family. In terms of assembly, forms homodimers via the RxLR-dEER motif. Interacts with host E3 ligase CMPG1. Interacts with host DRP2. Proteolytically cleaved. The cleavage site directly after the RxLR sequence and the high conservation among other effector proteins suggest that the RxLR motif might play a crucial role in the intracellular processing before secretion. Post-translationally, glycosylated. In terms of processing, N-acetylated at Lys-48 after cleavage.

Its subcellular location is the secreted. The protein resides in the host cytoplasm. The protein localises to the host endosome. In terms of biological role, multifunctional effector that can suppress host BAK1/SERK3-mediated immunity through at least two different pathways. Manipulates plant immunity by targeting and stabilizing host E3 ligase CMPG1. Preventing the normal 26S proteasome-dependent degradation of potato CMPG1, and thus potentially of its protein substrates in the host cell, further abolishes host cell death during the biotrophic phase of infection. Also associates with the dynamin-related protein 2 (DRP2), a plant GTPase involved in immune receptor-mediated endocytosis. The Avr3A(KI) form is recognized by R3a which triggers R3a-mediated hypersensitivity and suppresses INF1-induced cell death. The protein is RxLR effector protein Avr3a of Phytophthora infestans (Potato late blight agent).